The primary structure comprises 440 residues: L-gulonolactone oxidase (440 aa).

Positions 17–187 constitute an FAD-binding PCMH-type domain; it reads YGCSPEMYYQ…LTVTLQCVPQ (171 aa). Residue histidine 54 is modified to Pros-8alpha-FAD histidine. Residues 251-273 form a helical membrane-spanning segment; it reads IGFYLLEFLLWTSTYLPRLVGWI.

It belongs to the oxygen-dependent FAD-linked oxidoreductase family. It depends on FAD as a cofactor. As to expression, highly expressed in liver.

The protein resides in the microsome membrane. Its subcellular location is the endoplasmic reticulum membrane. It catalyses the reaction L-gulono-1,4-lactone + O2 = L-ascorbate + H2O2 + H(+). The protein operates within cofactor biosynthesis; L-ascorbate biosynthesis via UDP-alpha-D-glucuronate pathway; L-ascorbate from UDP-alpha-D-glucuronate: step 4/4. Oxidizes L-gulono-1,4-lactone to hydrogen peroxide and L-xylo-hexulonolactone which spontaneously isomerizes to L-ascorbate. This chain is L-gulonolactone oxidase (Gulo), found in Mus musculus (Mouse).